The chain runs to 163 residues: Beta-carbonic anhydrase 1 (163 aa).

Residues Cys-35, Asp-37, His-88, and Cys-91 each coordinate Zn(2+).

The protein belongs to the beta-class carbonic anhydrase family. As to quaternary structure, homotetramer. Requires Zn(2+) as cofactor.

The catalysed reaction is hydrogencarbonate + H(+) = CO2 + H2O. Its function is as follows. Catalyzes the reversible hydration of carbon dioxide to form bicarbonate. The chain is Beta-carbonic anhydrase 1 from Mycobacterium bovis (strain ATCC BAA-935 / AF2122/97).